A 195-amino-acid chain; its full sequence is Adenylate kinase (195 aa).

11 to 16 (GAGKGT) contributes to the ATP binding site. The tract at residues 31 to 60 (STGDIFRAAVRNQTPLGQQVQAYLDSGRLV) is NMP. Residues T32, R37, 58-60 (RLV), 86-89 (GFPR), and Q93 each bind AMP. The interval 127–137 (LRAEKESRKDD) is LID. Residue R128 coordinates ATP. Residues R134 and R145 each contribute to the AMP site. Q173 contributes to the ATP binding site.

The protein belongs to the adenylate kinase family. As to quaternary structure, monomer.

The protein resides in the cytoplasm. The catalysed reaction is AMP + ATP = 2 ADP. Its pathway is purine metabolism; AMP biosynthesis via salvage pathway; AMP from ADP: step 1/1. Functionally, catalyzes the reversible transfer of the terminal phosphate group between ATP and AMP. Plays an important role in cellular energy homeostasis and in adenine nucleotide metabolism. The polypeptide is Adenylate kinase (Cyanothece sp. (strain PCC 7425 / ATCC 29141)).